The sequence spans 144 residues: Large ribosomal subunit protein uL15 (144 aa).

A disordered region spans residues 1–56 (MELNNLKPAAGAKHAKRRVGRGIGSGLGKTAGRGHKGQKSRSGGFHKVGFEGGQMP). Residues 21–31 (RGIGSGLGKTA) show a composition bias toward gly residues.

Belongs to the universal ribosomal protein uL15 family. As to quaternary structure, part of the 50S ribosomal subunit.

Its function is as follows. Binds to the 23S rRNA. The chain is Large ribosomal subunit protein uL15 from Burkholderia ambifaria (strain MC40-6).